The sequence spans 777 residues: Probable aconitate hydratase, mitochondrial (777 aa).

Residues 1-26 constitute a mitochondrion transit peptide; the sequence is MNSLLRLSHLAGPAHYRALHSSSSIW. Substrate is bound by residues Q96 and 189 to 191; that span reads DSH. 3 residues coordinate [4Fe-4S] cluster: C382, C445, and C448. Residues R471 and R476 each coordinate substrate. Residues 534-555 are disordered; the sequence is YDPGEDTFQAPSGSGQVDVSPS. The segment covering 542–555 has biased composition (polar residues); it reads QAPSGSGQVDVSPS. Residues R601 and 664 to 665 each bind substrate; that span reads SR.

It belongs to the aconitase/IPM isomerase family. In terms of assembly, monomer. [4Fe-4S] cluster is required as a cofactor.

It is found in the mitochondrion. The catalysed reaction is citrate = D-threo-isocitrate. It participates in carbohydrate metabolism; tricarboxylic acid cycle; isocitrate from oxaloacetate: step 2/2. Its function is as follows. Catalyzes the isomerization of citrate to isocitrate via cis-aconitate. This is Probable aconitate hydratase, mitochondrial from Caenorhabditis elegans.